The chain runs to 467 residues: MADRISTGELGRRPGQGRVNLLLVGDATRYFLAGSMQKFFPSTAQITLTISNVKKVAVLLAANSFDIIFLKVTSTLTAEEQEAAKLIRSGKKKNTHLLFAFVIPERLKGYVSEYGADISFSEPLTLEKVNTVIHYWKTYFTNTDMENTELPPECRLYFQTSRSELGGRFSTDMFLCSELLKNDARLGLKAPLSSLDKSKQASFLHSTKEKLRRERIKSCCEQLRTLLPYVKGRKSDVASVIEATVDYVKQVRESLSPAIMAQVTEAIQNNRRFSKRQMPIELFLPFSATSQREDAMLTSAFSPVQEIQLLADRGLNVYSMTAAGGALEGAVRGQPGSVSESSIEDLYKTRVPSTARSLNSFHSVKYTSGTVSPHEAAARTNQNISTYLPPTAPSVSNFIPQHCNAMLCPARPTSPNCLCTPGHELAASSRAASASIFRGFRAASASDHQASQPPALPSPQPHDSSYF.

The region spanning 200-251 (QASFLHSTKEKLRRERIKSCCEQLRTLLPYVKGRKSDVASVIEATVDYVKQV) is the bHLH domain. Residues 443–453 (ASASDHQASQP) show a composition bias toward low complexity. Positions 443–467 (ASASDHQASQPPALPSPQPHDSSYF) are disordered.

In terms of assembly, forms both hetero- and homodimers with SOHLH1. As to expression, preferentially expressed in the adult ovary and testis. Expressed in the majority of spermatogonia in adult animals, but not in the most undifferentiated spermatogonial population.

The protein localises to the nucleus. It is found in the cytoplasm. In terms of biological role, transcription regulator of both male and female germline differentiation. Suppresses genes involved in spermatogonial stem cells maintenance, and induces genes important for spermatogonial differentiation. Coordinates oocyte differentiation without affecting meiosis I. This is Spermatogenesis- and oogenesis-specific basic helix-loop-helix-containing protein 2 (Sohlh2) from Mus musculus (Mouse).